We begin with the raw amino-acid sequence, 1958 residues long: MASTSSGGRGEDGRPPQMQPVRSMSRKMTRAGTMMIEHPNEDERPIDSELVPSSLASIAPILRVANDIDQDNARVAYLCRFHAFEKAHRMDPTSSGRGVRQFKTYLLHKLEEEEEITEHMLAKSDPREIQLYYQTFYENNIQDGEGKKTPEEMAKLYQIATVLYDVLKTVVPQARIDDKTLRYAKEVERKKEQYEHYNILPLYALGAKTAVMELPEIKAAILAVCNVDNLPRPRFHSASANLDEVDRERGRSFNDILEWLALVFGFQRGNVANQREHLILLLANIDVRKRDLENYVEIKPSTVRKLMEKYFKNYNSWCKYLRCDSYLRFPAGCDKQQLSLLYIGLYLLIWGEASNVRFMPECLCYIFHNMANEVHGILFGNVYPVTGDTYEAGAPDEEAFLRNVITPIYQVLRKEVRRNKNGKASHSKWRNYDDLNEYFWDKRCFRLKWPMNFKADFFIHTDEISQVPNQRHDQVSHGKRKPKTNFVEARTFWNLYRSFDRMWMFLVLSLQTMIIVAWHPSGSILAIFTEDVFRNVLTIFITSAFLNLLQATLDLVLSFGAWKSLKFSQIMRYITKFLMAAMWAIMLPITYSKSVQNPTGLIKFFSSWVGSWLHRSLYDYAIALYVLPNILAAVFFLLPPLRRIMERSNMRIVTLIMWWAQPKLYIGRGMHEEMFALFKYTFFWVMLLLSKLAFSYYVEILPLVNPTKLIWDMHVVNYEWHEFFPNATHNIGVIIAIWGPIVLVYFMDTQIWYAIFSTLFGGIYGAFSHLGEIRTLGMLRSRFKVVPSAFCSKLTPLPLGHAKRKHLDETVDEKDIARFSQMWNKFIHTMRDEDLISDRERDLLLVPSSSGDVTVVQWPPFLLASKIPIALDMAKDFKGKEDVDLFKKIKSEYYMHYAVVEAYETVRDIIYGLLQDESDKRIVREICYEVDISIQQHRFLSEFRMTGMPLLSDKLEKFLKILLSDYEEDDYKSQIINVLQDIIEIITQDVMVNGHEILERAHLQSGDIESDKKEQRFEKIDLSLTQNISWREKVVRLLLLLTVKESAINIPQSLEARRRMTFFANSLFMNMPDAPRVRDMLSFSVLTPYYKEDVLYSEEELNKENEDGITILFYLQRIYPEEWSNYCERVNDLKRNLSEKDKAEQLRQWVSYRGQTLSRTVRGMMYYRVALELQCFQEYTEENATNGGYLPSESNEDDRKAFSDRARALADLKFTYVVSCQVYGNQKKSSESRDRSCYNNILQLMLKYPSLRVAYIDEREETVNGKSQKVFYSVLLKGCDKLDEEIYRIKLPGPPTEIGEGKPENQNHAIIFTRGEALQTIDMNQDNYFEECFKMRNVLQEFDEGRRGKRNPTILGLREHIFTGSVSSLAWFMSNQETSFVTIGQRVLANPLRVRFHYGHPDIFDRIFHITRGGISKASKIINLSEDIFAGYNSTLRGGYVTHHEYIQAGKGRDVGMNQISFFEAKVANGNGEQTLSRDVYRLGRRFDFYRMLSFYFTTVGFYFSSMITVLTVYVFLYGRLYLVLSGLEKNILQSASVHESNALEQALAAQSVFQLGFLMVLPMVMEIGLEKGFRTALGDFIIMQLQLASVFFTFQLGTKAHYFGRTILHGGSKYRATGRGFVVFHAKFAENYRLYSRSHFVKGLELVILLVVYQVYGTSYRSSSTYMYITFSMWFLVTSWLFAPFIFNPSGFEWQKTVDDWTDWKRWMGNRGGIGIVLDKSWESWWDIEQEHLKHTNLRGRVLEILLALRFLLYQYGIVYHLNIARRHTTFLVYGLSWAILLSVLLVLKMVSMGRRKFGTDFQVMFRILKALLFLGFLSVMTVLFVVCGLTISDLFASILAFLPTGWAILLIGQALRSVFKGLGFWDSVKELGRAYEYIMGLVIFTPIAVLSWFPFVSEFQTRLLFNQAFSRGLQISMILAGKKDKETPSTKYLGHTEESFGLEHDTNTFNHYYLWT.

Residues 1–29 form a disordered region; that stretch reads MASTSSGGRGEDGRPPQMQPVRSMSRKMT. Topologically, residues 1–504 are cytoplasmic; it reads MASTSSGGRG…LYRSFDRMWM (504 aa). Residues 505-525 traverse the membrane as a helical segment; it reads FLVLSLQTMIIVAWHPSGSIL. The Extracellular portion of the chain corresponds to 526 to 535; that stretch reads AIFTEDVFRN. The chain crosses the membrane as a helical span at residues 536 to 556; that stretch reads VLTIFITSAFLNLLQATLDLV. The Cytoplasmic portion of the chain corresponds to 557 to 569; the sequence is LSFGAWKSLKFSQ. A helical membrane pass occupies residues 570-590; the sequence is IMRYITKFLMAAMWAIMLPIT. Over 591–620 the chain is Extracellular; it reads YSKSVQNPTGLIKFFSSWVGSWLHRSLYDY. A helical transmembrane segment spans residues 621 to 641; sequence AIALYVLPNILAAVFFLLPPL. Topologically, residues 642-673 are cytoplasmic; sequence RRIMERSNMRIVTLIMWWAQPKLYIGRGMHEE. Residues 674–694 traverse the membrane as a helical segment; the sequence is MFALFKYTFFWVMLLLSKLAF. Residues 695-730 are Extracellular-facing; it reads SYYVEILPLVNPTKLIWDMHVVNYEWHEFFPNATHN. A helical transmembrane segment spans residues 731-751; it reads IGVIIAIWGPIVLVYFMDTQI. At 752–1496 the chain is on the cytoplasmic side; that stretch reads WYAIFSTLFG…FDFYRMLSFY (745 aa). The helical transmembrane segment at 1497–1517 threads the bilayer; it reads FTTVGFYFSSMITVLTVYVFL. Topologically, residues 1518–1547 are extracellular; it reads YGRLYLVLSGLEKNILQSASVHESNALEQA. The helical transmembrane segment at 1548-1568 threads the bilayer; the sequence is LAAQSVFQLGFLMVLPMVMEI. The Cytoplasmic segment spans residues 1569–1576; sequence GLEKGFRT. The chain crosses the membrane as a helical span at residues 1577–1597; sequence ALGDFIIMQLQLASVFFTFQL. The Extracellular portion of the chain corresponds to 1598–1640; it reads GTKAHYFGRTILHGGSKYRATGRGFVVFHAKFAENYRLYSRSH. Residues 1641 to 1661 traverse the membrane as a helical segment; that stretch reads FVKGLELVILLVVYQVYGTSY. At 1662-1667 the chain is on the cytoplasmic side; sequence RSSSTY. The helical transmembrane segment at 1668-1688 threads the bilayer; the sequence is MYITFSMWFLVTSWLFAPFIF. Topologically, residues 1689-1742 are extracellular; it reads NPSGFEWQKTVDDWTDWKRWMGNRGGIGIVLDKSWESWWDIEQEHLKHTNLRGR. The helical transmembrane segment at 1743-1763 threads the bilayer; that stretch reads VLEILLALRFLLYQYGIVYHL. Residues 1764-1771 lie on the Cytoplasmic side of the membrane; it reads NIARRHTT. A helical transmembrane segment spans residues 1772–1792; that stretch reads FLVYGLSWAILLSVLLVLKMV. Residues 1793 to 1812 lie on the Extracellular side of the membrane; sequence SMGRRKFGTDFQVMFRILKA. The chain crosses the membrane as a helical span at residues 1813-1833; it reads LLFLGFLSVMTVLFVVCGLTI. At 1834-1835 the chain is on the cytoplasmic side; sequence SD. The chain crosses the membrane as a helical span at residues 1836 to 1856; sequence LFASILAFLPTGWAILLIGQA. Residues 1857 to 1878 are Extracellular-facing; the sequence is LRSVFKGLGFWDSVKELGRAYE. A helical transmembrane segment spans residues 1879-1899; sequence YIMGLVIFTPIAVLSWFPFVS. The Cytoplasmic segment spans residues 1900–1958; it reads EFQTRLLFNQAFSRGLQISMILAGKKDKETPSTKYLGHTEESFGLEHDTNTFNHYYLWT.

Belongs to the glycosyltransferase 48 family.

Its subcellular location is the cell membrane. It carries out the reaction [(1-&gt;3)-beta-D-glucosyl](n) + UDP-alpha-D-glucose = [(1-&gt;3)-beta-D-glucosyl](n+1) + UDP + H(+). Its function is as follows. Involved in callose synthesis at the forming cell plate during cytokinesis. During plant growth and development, callose is found as a transitory component of the cell plate in dividing cells, is a major component of pollen mother cell walls and pollen tubes, and is found as a structural component of plasmodesmatal canals. This chain is Callose synthase 7 (CALS7), found in Arabidopsis thaliana (Mouse-ear cress).